Here is a 423-residue protein sequence, read N- to C-terminus: Serine--tRNA ligase (423 aa).

229–231 (TAE) is a binding site for L-serine. Residue 260–262 (RKE) participates in ATP binding. Glu-283 contributes to the L-serine binding site. Position 347–350 (347–350 (EVSS)) interacts with ATP. Position 383 (Ser-383) interacts with L-serine.

It belongs to the class-II aminoacyl-tRNA synthetase family. Type-1 seryl-tRNA synthetase subfamily. As to quaternary structure, homodimer. The tRNA molecule binds across the dimer.

It localises to the cytoplasm. It carries out the reaction tRNA(Ser) + L-serine + ATP = L-seryl-tRNA(Ser) + AMP + diphosphate + H(+). It catalyses the reaction tRNA(Sec) + L-serine + ATP = L-seryl-tRNA(Sec) + AMP + diphosphate + H(+). Its pathway is aminoacyl-tRNA biosynthesis; selenocysteinyl-tRNA(Sec) biosynthesis; L-seryl-tRNA(Sec) from L-serine and tRNA(Sec): step 1/1. Its function is as follows. Catalyzes the attachment of serine to tRNA(Ser). Is also able to aminoacylate tRNA(Sec) with serine, to form the misacylated tRNA L-seryl-tRNA(Sec), which will be further converted into selenocysteinyl-tRNA(Sec). This is Serine--tRNA ligase from Chloroflexus aurantiacus (strain ATCC 29366 / DSM 635 / J-10-fl).